Here is a 556-residue protein sequence, read N- to C-terminus: 2-succinyl-5-enolpyruvyl-6-hydroxy-3-cyclohexene-1-carboxylate synthase (556 aa).

Belongs to the TPP enzyme family. MenD subfamily. Homodimer. It depends on Mg(2+) as a cofactor. Mn(2+) is required as a cofactor. The cofactor is thiamine diphosphate.

The catalysed reaction is isochorismate + 2-oxoglutarate + H(+) = 5-enolpyruvoyl-6-hydroxy-2-succinyl-cyclohex-3-ene-1-carboxylate + CO2. It functions in the pathway quinol/quinone metabolism; 1,4-dihydroxy-2-naphthoate biosynthesis; 1,4-dihydroxy-2-naphthoate from chorismate: step 2/7. The protein operates within quinol/quinone metabolism; menaquinone biosynthesis. In terms of biological role, catalyzes the thiamine diphosphate-dependent decarboxylation of 2-oxoglutarate and the subsequent addition of the resulting succinic semialdehyde-thiamine pyrophosphate anion to isochorismate to yield 2-succinyl-5-enolpyruvyl-6-hydroxy-3-cyclohexene-1-carboxylate (SEPHCHC). The protein is 2-succinyl-5-enolpyruvyl-6-hydroxy-3-cyclohexene-1-carboxylate synthase of Salmonella paratyphi A (strain AKU_12601).